The sequence spans 151 residues: MSLRRTILDLHRQTQRATLSKSLPFSMSHISSASATAAVRNPLGRDLSSIPFAQAQKLKPDSTNLVTDRSISSSIGQSELNKAAKFSRQSSSRGYTNGSFLRKIPVVFHIHEGMEEILADYVHQEMTRNLIVMSLGLFQIIVLKDIILFLL.

A mitochondrion-targeting transit peptide spans 1–78 (MSLRRTILDL…RSISSSIGQS (78 aa)). His109 is a heme binding site. A ubiquinone is bound at residue Tyr121. Residues 130-150 (LIVMSLGLFQIIVLKDIILFL) traverse the membrane as a helical segment.

As to quaternary structure, component of complex II composed of eight subunits in plants: four classical SDH subunits SDH1, SDH2, SDH3 and SDH4 (a flavoprotein (FP), an iron-sulfur protein (IP), and a cytochrome b composed of a large and a small subunit.), as well as four subunits unknown in mitochondria from bacteria and heterotrophic eukaryotes. It depends on heme as a cofactor. Expressed in flowers, inflorescences and stems.

The protein localises to the mitochondrion inner membrane. Its pathway is carbohydrate metabolism; tricarboxylic acid cycle. Membrane-anchoring subunit of succinate dehydrogenase (SDH). The polypeptide is Succinate dehydrogenase subunit 4, mitochondrial (Arabidopsis thaliana (Mouse-ear cress)).